Reading from the N-terminus, the 119-residue chain is Protein yippee-like 3 (119 aa).

Residues 19-116 (RRYSCVHCRA…IELSHMIKDN (98 aa)) enclose the Yippee domain. Cys-23, Cys-26, Cys-79, and Cys-82 together coordinate Zn(2+).

It belongs to the yippee family.

It localises to the nucleus. It is found in the nucleolus. Its function is as follows. May be involved in proliferation and apoptosis in myeloid precursor cells. The polypeptide is Protein yippee-like 3 (ypel3) (Oryzias latipes (Japanese rice fish)).